The primary structure comprises 158 residues: Transcription antitermination protein NusB (158 aa).

Residues 1–12 (MKRVEKRAEKQG) show a composition bias toward basic and acidic residues. A disordered region spans residues 1-20 (MKRVEKRAEKQGRGTARKSR).

This sequence belongs to the NusB family.

Its function is as follows. Involved in transcription antitermination. Required for transcription of ribosomal RNA (rRNA) genes. Binds specifically to the boxA antiterminator sequence of the ribosomal RNA (rrn) operons. This chain is Transcription antitermination protein NusB, found in Nitrosospira multiformis (strain ATCC 25196 / NCIMB 11849 / C 71).